The primary structure comprises 81 residues: Small ribosomal subunit protein bS20 (81 aa).

It belongs to the bacterial ribosomal protein bS20 family.

Binds directly to 16S ribosomal RNA. This chain is Small ribosomal subunit protein bS20, found in Mycoplasma mycoides subsp. mycoides SC (strain CCUG 32753 / NCTC 10114 / PG1).